The chain runs to 29 residues: Cyclotide mela-3 (29 aa).

The cyclopeptide (Gly-Asp) cross-link spans 1 to 29 (GKPICGETCFKGKCYTPGCTCSYPICKKD). 3 cysteine pairs are disulfide-bonded: cysteine 5/cysteine 19, cysteine 9/cysteine 21, and cysteine 14/cysteine 26.

Post-translationally, this is a cyclic peptide. Contains 3 disulfide bonds.

Probably participates in a plant defense mechanism (Potential). Binds to and induces leakage in phospholipd membranes, particularly ones containing 1-palmitoyl-2-oleophosphatidylethanolamine (POPE). In vitro, displays cytotoxicity against cultured cells. Not active against Gram-negative bacterium E.coli ATCC 25922 or Gram-positive bacterium S.aureus ATCC 25923 up to a concentration of 64 uM. The sequence is that of Cyclotide mela-3 from Melicytus latifolius (Norfolk Island mahoe).